The chain runs to 94 residues: Co-chaperonin GroES (94 aa).

Belongs to the GroES chaperonin family. Heptamer of 7 subunits arranged in a ring. Interacts with the chaperonin GroEL.

The protein resides in the cytoplasm. Functionally, together with the chaperonin GroEL, plays an essential role in assisting protein folding. The GroEL-GroES system forms a nano-cage that allows encapsulation of the non-native substrate proteins and provides a physical environment optimized to promote and accelerate protein folding. GroES binds to the apical surface of the GroEL ring, thereby capping the opening of the GroEL channel. This is Co-chaperonin GroES from Streptococcus oralis.